We begin with the raw amino-acid sequence, 414 residues long: Multifunctional CCA protein (414 aa).

2 residues coordinate ATP: Gly-8 and Arg-11. Residues Gly-8 and Arg-11 each coordinate CTP. The Mg(2+) site is built by Glu-21 and Asp-23. Residues Arg-91, Arg-137, and Arg-140 each coordinate ATP. Positions 91, 137, and 140 each coordinate CTP. The HD domain occupies 228–329 (TGIHTLMTLA…LKLFDAIDVW (102 aa)).

Belongs to the tRNA nucleotidyltransferase/poly(A) polymerase family. Bacterial CCA-adding enzyme type 1 subfamily. Monomer. Can also form homodimers and oligomers. Requires Mg(2+) as cofactor. Ni(2+) is required as a cofactor.

The catalysed reaction is a tRNA precursor + 2 CTP + ATP = a tRNA with a 3' CCA end + 3 diphosphate. It carries out the reaction a tRNA with a 3' CCA end + 2 CTP + ATP = a tRNA with a 3' CCACCA end + 3 diphosphate. In terms of biological role, catalyzes the addition and repair of the essential 3'-terminal CCA sequence in tRNAs without using a nucleic acid template. Adds these three nucleotides in the order of C, C, and A to the tRNA nucleotide-73, using CTP and ATP as substrates and producing inorganic pyrophosphate. tRNA 3'-terminal CCA addition is required both for tRNA processing and repair. Also involved in tRNA surveillance by mediating tandem CCA addition to generate a CCACCA at the 3' terminus of unstable tRNAs. While stable tRNAs receive only 3'-terminal CCA, unstable tRNAs are marked with CCACCA and rapidly degraded. The chain is Multifunctional CCA protein from Yersinia enterocolitica serotype O:8 / biotype 1B (strain NCTC 13174 / 8081).